A 468-amino-acid polypeptide reads, in one-letter code: Mannan endo-1,4-beta-mannosidase 3 (468 aa).

Positions 1-23 (MTVRPRPAAAAIIIAAVFGAAAA) are cleaved as a signal peptide. Trp86 is a binding site for substrate. The N-linked (GlcNAc...) asparagine glycan is linked to Asn152. Asn201 contributes to the substrate binding site. Glu202 serves as the catalytic Proton donor. Tyr281 contributes to the substrate binding site. N-linked (GlcNAc...) asparagine glycosylation is present at Asn300. The Nucleophile role is filled by Glu321. The N-linked (GlcNAc...) asparagine glycan is linked to Asn333. 2 residues coordinate substrate: Trp364 and Asp371. The interval 415-436 (LRRRRRRPASSHRKTRLGSGGD) is disordered. Residues 416–430 (RRRRRRPASSHRKTR) show a composition bias toward basic residues.

Belongs to the glycosyl hydrolase 5 (cellulase A) family. As to expression, expressed in seeds.

Its subcellular location is the secreted. The enzyme catalyses Random hydrolysis of (1-&gt;4)-beta-D-mannosidic linkages in mannans, galactomannans and glucomannans.. This chain is Mannan endo-1,4-beta-mannosidase 3 (MAN3), found in Oryza sativa subsp. japonica (Rice).